The sequence spans 768 residues: Probable beta-glucosidase M (768 aa).

The signal sequence occupies residues 1 to 19 (MHAIAGLTGFLAGVSLSYA). Asn25, Asn72, and Asn259 each carry an N-linked (GlcNAc...) asparagine glycan. Residue Asp287 is part of the active site. 7 N-linked (GlcNAc...) asparagine glycosylation sites follow: Asn315, Asn322, Asn394, Asn434, Asn472, Asn543, and Asn651.

This sequence belongs to the glycosyl hydrolase 3 family.

The protein resides in the secreted. The catalysed reaction is Hydrolysis of terminal, non-reducing beta-D-glucosyl residues with release of beta-D-glucose.. The protein operates within glycan metabolism; cellulose degradation. Functionally, beta-glucosidases are one of a number of cellulolytic enzymes involved in the degradation of cellulosic biomass. Catalyzes the last step releasing glucose from the inhibitory cellobiose. This is Probable beta-glucosidase M (bglM) from Aspergillus flavus (strain ATCC 200026 / FGSC A1120 / IAM 13836 / NRRL 3357 / JCM 12722 / SRRC 167).